The chain runs to 619 residues: Chaperone protein HscA homolog (619 aa).

This sequence belongs to the heat shock protein 70 family.

Chaperone involved in the maturation of iron-sulfur cluster-containing proteins. Has a low intrinsic ATPase activity which is markedly stimulated by HscB. The chain is Chaperone protein HscA homolog from Chromobacterium violaceum (strain ATCC 12472 / DSM 30191 / JCM 1249 / CCUG 213 / NBRC 12614 / NCIMB 9131 / NCTC 9757 / MK).